The primary structure comprises 316 residues: MAAYIIRRTLMSIPILLGITILSFVIMKAAPGDPMTLMMDPKISQADREQFIEKYGLNDPQYVQYLKWLGNMVQGDFGTSIVRKGTPVSELIMARLPNTLLLMLVSTILALMISIPFGVLSAKRPYSKIDYGITFTSFIGLAIPNFWFGLILIMVLSVNLGWFPTGGVETLNTEFNIFDRIHHLILPAFVLATADMAGLTRYTRSNMLDVLNQDYIRTARAKGFKENRVLFKHGLRNALLPVITIFGLMIPSFIGGSVVVEQIFTWPGLGKLFVDSAFQRDYPVIMAMTVISAVLVVVGNLIADILYAIVDPRIEY.

6 consecutive transmembrane segments (helical) span residues 10 to 30, 100 to 120, 138 to 158, 177 to 197, 240 to 260, and 290 to 310; these read LMSI…MKAA, LLLM…FGVL, FIGL…VLSV, IFDR…ADMA, LPVI…SVVV, and VISA…YAIV. Positions 96 to 303 constitute an ABC transmembrane type-1 domain; sequence LPNTLLLMLV…VLVVVGNLIA (208 aa).

It belongs to the binding-protein-dependent transport system permease family. OppBC subfamily.

The protein localises to the cell membrane. This protein is a component of an oligopeptide permease, a binding protein-dependent transport system. This APP system can completely substitute for the OPP system in both sporulation and genetic competence, though, unlike OPP, is incapable of transporting tripeptides. Probably responsible for the translocation of the substrate across the membrane. The chain is Oligopeptide transport system permease protein AppB (appB) from Bacillus subtilis (strain 168).